The chain runs to 370 residues: 4-hydroxy-3-methylbut-2-en-1-yl diphosphate synthase (flavodoxin) (370 aa).

4 residues coordinate [4Fe-4S] cluster: Cys268, Cys271, Cys303, and Glu310.

The protein belongs to the IspG family. The cofactor is [4Fe-4S] cluster.

The catalysed reaction is (2E)-4-hydroxy-3-methylbut-2-enyl diphosphate + oxidized [flavodoxin] + H2O + 2 H(+) = 2-C-methyl-D-erythritol 2,4-cyclic diphosphate + reduced [flavodoxin]. It functions in the pathway isoprenoid biosynthesis; isopentenyl diphosphate biosynthesis via DXP pathway; isopentenyl diphosphate from 1-deoxy-D-xylulose 5-phosphate: step 5/6. Its function is as follows. Converts 2C-methyl-D-erythritol 2,4-cyclodiphosphate (ME-2,4cPP) into 1-hydroxy-2-methyl-2-(E)-butenyl 4-diphosphate. The sequence is that of 4-hydroxy-3-methylbut-2-en-1-yl diphosphate synthase (flavodoxin) from Bacillus cereus (strain AH187).